Reading from the N-terminus, the 515-residue chain is Bifunctional purine biosynthesis protein PurH (515 aa).

The MGS-like domain occupies 1 to 145 (MTKRALISVS…KNHASVTVVV (145 aa)).

It belongs to the PurH family.

The enzyme catalyses (6R)-10-formyltetrahydrofolate + 5-amino-1-(5-phospho-beta-D-ribosyl)imidazole-4-carboxamide = 5-formamido-1-(5-phospho-D-ribosyl)imidazole-4-carboxamide + (6S)-5,6,7,8-tetrahydrofolate. The catalysed reaction is IMP + H2O = 5-formamido-1-(5-phospho-D-ribosyl)imidazole-4-carboxamide. It participates in purine metabolism; IMP biosynthesis via de novo pathway; 5-formamido-1-(5-phospho-D-ribosyl)imidazole-4-carboxamide from 5-amino-1-(5-phospho-D-ribosyl)imidazole-4-carboxamide (10-formyl THF route): step 1/1. Its pathway is purine metabolism; IMP biosynthesis via de novo pathway; IMP from 5-formamido-1-(5-phospho-D-ribosyl)imidazole-4-carboxamide: step 1/1. The protein is Bifunctional purine biosynthesis protein PurH of Streptococcus suis.